Reading from the N-terminus, the 40-residue chain is MITDVQLAIFSNVLGVFLFLLVVAYHYINANTGKPSAKAK.

At 1-4 (MITD) the chain is on the lumenal side. The chain crosses the membrane as a helical span at residues 5-25 (VQLAIFSNVLGVFLFLLVVAY). The Cytoplasmic portion of the chain corresponds to 26–40 (HYINANTGKPSAKAK).

It belongs to the OST4 family. As to quaternary structure, component of the oligosaccharyltransferase (OST) complex.

It is found in the endoplasmic reticulum membrane. Functionally, subunit of the oligosaccharyl transferase (OST) complex that catalyzes the initial transfer of a defined glycan (Glc(3)Man(9)GlcNAc(2) in eukaryotes) from the lipid carrier dolichol-pyrophosphate to an asparagine residue within an Asn-X-Ser/Thr consensus motif in nascent polypeptide chains, the first step in protein N-glycosylation. N-glycosylation occurs cotranslationally and the complex associates with the Sec61 complex at the channel-forming translocon complex that mediates protein translocation across the endoplasmic reticulum (ER). All subunits are required for a maximal enzyme activity. The protein is Dolichyl-diphosphooligosaccharide--protein glycosyltransferase subunit 4 of Drosophila erecta (Fruit fly).